The following is a 300-amino-acid chain: UPF0761 membrane protein Patl_3954 (300 aa).

A run of 6 helical transmembrane segments spans residues 46–66 (LLSL…FPAF), 103–123 (MGAI…SNID), 138–158 (IIFT…LIGL), 184–204 (MLKI…YMIV), 214–234 (ALVG…GFSF), and 248–268 (AMAV…VVLL).

Belongs to the UPF0761 family.

The protein localises to the cell inner membrane. The chain is UPF0761 membrane protein Patl_3954 from Pseudoalteromonas atlantica (strain T6c / ATCC BAA-1087).